We begin with the raw amino-acid sequence, 158 residues long: Small ribosomal subunit protein uS9 (158 aa).

The protein belongs to the universal ribosomal protein uS9 family.

This is Small ribosomal subunit protein uS9 from Brucella canis (strain ATCC 23365 / NCTC 10854 / RM-666).